The sequence spans 429 residues: Glutamate-1-semialdehyde 2,1-aminomutase (429 aa).

Lys264 carries the N6-(pyridoxal phosphate)lysine modification.

The protein belongs to the class-III pyridoxal-phosphate-dependent aminotransferase family. HemL subfamily. As to quaternary structure, homodimer. The cofactor is pyridoxal 5'-phosphate.

The protein resides in the cytoplasm. It carries out the reaction (S)-4-amino-5-oxopentanoate = 5-aminolevulinate. The protein operates within porphyrin-containing compound metabolism; protoporphyrin-IX biosynthesis; 5-aminolevulinate from L-glutamyl-tRNA(Glu): step 2/2. This is Glutamate-1-semialdehyde 2,1-aminomutase from Campylobacter curvus (strain 525.92).